The primary structure comprises 219 residues: Cytochrome b6 (219 aa).

A helical transmembrane segment spans residues 32-52 (IFYCFGGIVLTCFIIQAATGF). Position 35 (Cys35) interacts with heme c. 2 residues coordinate heme b: His86 and His100. 3 helical membrane passes run 90–110 (SGLMVLVLLLHVSRVYLTAGF), 116–136 (LTWISGVILAICTVSFGVTGY), and 190–210 (AHTFILPLVTLALLLTHFLMI). His191 and His206 together coordinate heme b.

This sequence belongs to the cytochrome b family. PetB subfamily. In terms of assembly, the 4 large subunits of the cytochrome b6-f complex are cytochrome b6, subunit IV (17 kDa polypeptide, PetD), cytochrome f and the Rieske protein, while the 4 small subunits are PetG, PetL, PetM and PetN. The complex functions as a dimer. Heme b serves as cofactor. It depends on heme c as a cofactor.

The protein localises to the plastid. Its subcellular location is the chloroplast thylakoid membrane. In terms of biological role, component of the cytochrome b6-f complex, which mediates electron transfer between photosystem II (PSII) and photosystem I (PSI), cyclic electron flow around PSI, and state transitions. This Amphidinium operculatum (Dinoflagellate) protein is Cytochrome b6.